The chain runs to 366 residues: MTPEHLPTEQYEAQLAEKVVRLQSMMAPFSDLVPEVFRSPVSHYRMRAEFRIWHDGDDLYHIIFDQQTKSRIRVDSFPAASELINQLMTAMIAGVRNNPVLRHKLFQIDYLTTLSNQAVVSLLYHKKLDDEWRQEAEALRDALRAQNLNVHLIGRATKTKIALDQDYIDERLPVAGKEMIYRQVENSFTQPNAAMNIQMLEWALDVTKGSKGDLLELYCGNGNFSLALARNFDRVLATEIAKPSVAAAQYNIAANHIDNVQIIRMAAEEFTQAMNGVREFNRLQGIDLKSYQCETIFVDPPRSGLDSETEKMVQAYPRILYISCNPETLCKNLETLSQTHKVERLALFDQFPYTHHMECGVLLTAK.

S-adenosyl-L-methionine is bound by residues Gln190, Tyr218, Asn223, Glu239, and Asp299. Cys324 acts as the Nucleophile in catalysis. The active-site Proton acceptor is Glu358.

It belongs to the class I-like SAM-binding methyltransferase superfamily. RNA M5U methyltransferase family. TrmA subfamily.

The catalysed reaction is uridine(54) in tRNA + S-adenosyl-L-methionine = 5-methyluridine(54) in tRNA + S-adenosyl-L-homocysteine + H(+). It catalyses the reaction uridine(341) in tmRNA + S-adenosyl-L-methionine = 5-methyluridine(341) in tmRNA + S-adenosyl-L-homocysteine + H(+). Its function is as follows. Dual-specificity methyltransferase that catalyzes the formation of 5-methyluridine at position 54 (m5U54) in all tRNAs, and that of position 341 (m5U341) in tmRNA (transfer-mRNA). This chain is tRNA/tmRNA (uracil-C(5))-methyltransferase, found in Escherichia coli O157:H7.